Consider the following 262-residue polypeptide: tRNA pseudouridine synthase A (262 aa).

D52 acts as the Nucleophile in catalysis. Substrate is bound at residue Y110.

The protein belongs to the tRNA pseudouridine synthase TruA family. In terms of assembly, homodimer.

It carries out the reaction uridine(38/39/40) in tRNA = pseudouridine(38/39/40) in tRNA. Functionally, formation of pseudouridine at positions 38, 39 and 40 in the anticodon stem and loop of transfer RNAs. The sequence is that of tRNA pseudouridine synthase A from Hydrogenovibrio crunogenus (strain DSM 25203 / XCL-2) (Thiomicrospira crunogena).